Consider the following 614-residue polypeptide: Leucine aminopeptidase 2 (614 aa).

A peptide is bound by residues 139 to 141 (QCQ) and 271 to 276 (PYGGME). H300 lines the Zn(2+) pocket. The active-site Proton acceptor is the E301. 2 residues coordinate Zn(2+): H304 and E323. The Proton donor role is filled by Y385.

The protein belongs to the peptidase M1 family. Zn(2+) is required as a cofactor.

It localises to the cytoplasm. The protein localises to the nucleus. It carries out the reaction an epoxide + H2O = an ethanediol. Its function is as follows. Aminopeptidase that preferentially cleaves di- and tripeptides. Also has low epoxide hydrolase activity (in vitro). Can hydrolyze the epoxide leukotriene LTA(4) but it forms preferentially 5,6-dihydroxy-7,9,11,14-eicosatetraenoic acid rather than the cytokine leukotriene B(4) as the product compared to the homologous mammalian enzyme (in vitro). In Aspergillus fumigatus (strain ATCC MYA-4609 / CBS 101355 / FGSC A1100 / Af293) (Neosartorya fumigata), this protein is Leucine aminopeptidase 2.